A 379-amino-acid chain; its full sequence is 23S rRNA (uracil(747)-C(5))-methyltransferase RlmC (379 aa).

[4Fe-4S] cluster contacts are provided by C3, C11, C14, and C87. S-adenosyl-L-methionine-binding residues include Q212, F241, E262, and N309. C336 functions as the Nucleophile in the catalytic mechanism.

Belongs to the class I-like SAM-binding methyltransferase superfamily. RNA M5U methyltransferase family. RlmC subfamily.

The catalysed reaction is uridine(747) in 23S rRNA + S-adenosyl-L-methionine = 5-methyluridine(747) in 23S rRNA + S-adenosyl-L-homocysteine + H(+). Its function is as follows. Catalyzes the formation of 5-methyl-uridine at position 747 (m5U747) in 23S rRNA. This is 23S rRNA (uracil(747)-C(5))-methyltransferase RlmC from Shewanella loihica (strain ATCC BAA-1088 / PV-4).